The chain runs to 993 residues: General transcription factor II-I repeat domain-containing protein 1 (993 aa).

2 GTF2I-like repeats span residues 117 to 211 (LGPT…EPKS) and 332 to 426 (LRET…DGTT). A disordered region spans residues 461 to 480 (GSRSEKSSISDECEPGTSSE). GTF2I-like repeat units lie at residues 597–691 (DGIG…LEDC), 727–821 (LSRI…RPDD), and 824–918 (ANRL…ICSE). Residues 916–961 (CSEPPKIKNGNTGPKRKRKRVSEGNSISSASSNCSSSSSSSSNMDP) are disordered. Residues 929 to 936 (PKRKRKRV) carry the Nuclear localization signal motif. Low complexity predominate over residues 938–961 (EGNSISSASSNCSSSSSSSSNMDP).

The protein belongs to the TFII-I family. In terms of assembly, interacts (via repeats 4-5) with foxh1/fast1 (via Fork-head domain). Interacts with smad2 and smad3 (via MH1 domain) in a ligand (activin)-dependent manner. Interacts with pou5f1.1/oct-25 to form a repression complex on the promoters of the gsc and mix2 genes. Uniformly expressed in the embryo in pre- and early gastrula stages. Enriched in the head region of early neurula through tailbud stages.

Its subcellular location is the nucleus. Transcription factor that activates a subset of organizer-specific genes. Binds to the distal element (DE) of the gsc promoter to regulate its expression. In the presence of pou5f1.1/oct-25, forms a repression complex on the promoter of the gsc and mix2 genes to inhibit their transcription. The protein is General transcription factor II-I repeat domain-containing protein 1 (gtf2ird1) of Xenopus laevis (African clawed frog).